Here is a 241-residue protein sequence, read N- to C-terminus: Kynurenine formamidase (241 aa).

Residues 23-27 (HGGAW) carry the HGGXW motif. Serine 95 serves as the catalytic Nucleophile. Residues aspartate 191 and histidine 223 contribute to the active site.

Belongs to the kynurenine formamidase family. As to quaternary structure, homodimer.

It carries out the reaction N-formyl-L-kynurenine + H2O = L-kynurenine + formate + H(+). It participates in amino-acid degradation; L-tryptophan degradation via kynurenine pathway; L-kynurenine from L-tryptophan: step 2/2. Its function is as follows. Catalyzes the hydrolysis of N-formyl-L-kynurenine to L-kynurenine, the second step in the kynurenine pathway of tryptophan degradation. Kynurenine may be further oxidized to nicotinic acid, NAD(H) and NADP(H). Required for elimination of toxic metabolites. The protein is Kynurenine formamidase of Eremothecium gossypii (strain ATCC 10895 / CBS 109.51 / FGSC 9923 / NRRL Y-1056) (Yeast).